A 489-amino-acid chain; its full sequence is GDP-fucose protein O-fucosyltransferase 4 (489 aa).

The Cytoplasmic portion of the chain corresponds to Met-1 to Glu-7. The helical; Signal-anchor for type II membrane protein transmembrane segment at Ala-8–Ser-24 threads the bilayer. Over Gly-25 to Leu-489 the chain is Lumenal. Asn-162 is a glycosylation site (N-linked (GlcNAc...) asparagine). Cysteines 385 and 388 form a disulfide.

It belongs to the glycosyltransferase 10 family. As to expression, widely expressed. Expressed at slightly higher level in heart, kidney and lung.

It is found in the endoplasmic reticulum membrane. It catalyses the reaction L-threonyl-[protein] + GDP-beta-L-fucose = 3-O-(alpha-L-fucosyl)-L-threonyl-[protein] + GDP + H(+). The enzyme catalyses L-seryl-[protein] + GDP-beta-L-fucose = 3-O-(alpha-L-fucosyl)-L-seryl-[protein] + GDP + H(+). Its pathway is protein modification; protein glycosylation. Functionally, protein O-fucosyltransferase that specifically catalyzes O-fucosylation of serine or threonine residues in EMI domains of target proteins, such as MMRN1, MMRN2 and EMID1. Attaches fucose through an O-glycosidic linkage. O-fucosylation of EMI domain-containing proteins may be required for facilitating protein folding and secretion. Also shows minor alpha-(1,3)-fucosyltransferase activity toward activity toward biantennary N-glycan acceptors. However, this was tested with a library of synthetic substrates and this activity is unsure in vivo. This Mus musculus (Mouse) protein is GDP-fucose protein O-fucosyltransferase 4 (Fut11).